A 78-amino-acid polypeptide reads, in one-letter code: UPF0612 protein new22 (78 aa).

It belongs to the UPF0612 family.

This is UPF0612 protein new22 (new22) from Schizosaccharomyces pombe (strain 972 / ATCC 24843) (Fission yeast).